The following is a 284-amino-acid chain: Diaminopimelate epimerase (284 aa).

2 residues coordinate substrate: asparagine 14 and asparagine 67. The active-site Proton donor is the cysteine 76. Substrate is bound by residues 77–78 (GN), asparagine 166, asparagine 199, and 217–218 (ER). The Proton acceptor role is filled by cysteine 226. 227 to 228 (GT) serves as a coordination point for substrate.

The protein belongs to the diaminopimelate epimerase family. In terms of assembly, homodimer.

Its subcellular location is the cytoplasm. It catalyses the reaction (2S,6S)-2,6-diaminopimelate = meso-2,6-diaminopimelate. Its pathway is amino-acid biosynthesis; L-lysine biosynthesis via DAP pathway; DL-2,6-diaminopimelate from LL-2,6-diaminopimelate: step 1/1. Its function is as follows. Catalyzes the stereoinversion of LL-2,6-diaminopimelate (L,L-DAP) to meso-diaminopimelate (meso-DAP), a precursor of L-lysine and an essential component of the bacterial peptidoglycan. This Bacillus pumilus (strain SAFR-032) protein is Diaminopimelate epimerase.